Reading from the N-terminus, the 289-residue chain is Diaminopimelate epimerase (289 aa).

Residues N13, Q47, and N67 each contribute to the substrate site. The active-site Proton donor is the C76. Substrate contacts are provided by residues 77 to 78 (GN), N167, N200, and 218 to 219 (ER). The active-site Proton acceptor is the C227. 228–229 (GT) lines the substrate pocket.

This sequence belongs to the diaminopimelate epimerase family. As to quaternary structure, homodimer.

The protein resides in the cytoplasm. The catalysed reaction is (2S,6S)-2,6-diaminopimelate = meso-2,6-diaminopimelate. The protein operates within amino-acid biosynthesis; L-lysine biosynthesis via DAP pathway; DL-2,6-diaminopimelate from LL-2,6-diaminopimelate: step 1/1. Its function is as follows. Catalyzes the stereoinversion of LL-2,6-diaminopimelate (L,L-DAP) to meso-diaminopimelate (meso-DAP), a precursor of L-lysine and an essential component of the bacterial peptidoglycan. This Burkholderia ambifaria (strain ATCC BAA-244 / DSM 16087 / CCUG 44356 / LMG 19182 / AMMD) (Burkholderia cepacia (strain AMMD)) protein is Diaminopimelate epimerase.